The sequence spans 37 residues: Large ribosomal subunit protein bL36 (37 aa).

Belongs to the bacterial ribosomal protein bL36 family.

In Oleidesulfovibrio alaskensis (strain ATCC BAA-1058 / DSM 17464 / G20) (Desulfovibrio alaskensis), this protein is Large ribosomal subunit protein bL36 (rpmJ).